The following is a 324-amino-acid chain: Stomatin-like protein stl-1 (324 aa).

The protein belongs to the band 7/mec-2 family. As to expression, widely expressed in most tissues, including body wall muscles, intestinal epithelia, and pharynx and head neurons.

It localises to the mitochondrion. Functionally, mitochondrial protein that probably regulates the biogenesis and the activity of mitochondria. In neurons, involved in mitochondrial fusion and recovery of normal locomotory behavior during reoxygenation; probably acts independently of egl-9 and the canonical hypoxia response pathway. This is Stomatin-like protein stl-1 from Caenorhabditis elegans.